The primary structure comprises 256 residues: Major prion protein (256 aa).

The first 24 residues, 1–24, serve as a signal peptide directing secretion; the sequence is MVKSHIGSWILVLFVAMWSDVGLC. Residues 25–233 are interaction with GRB2, ERI3 and SYN1; that stretch reads KKRPKPGGGW…ESEAYYQRGA (209 aa). The tract at residues 28 to 110 is disordered; the sequence is PKPGGGWNTG…QWNKPSKPKT (83 aa). A run of 5 repeats spans residues 54–62, 63–70, 71–78, 79–86, and 87–95. A 5 X 8 AA tandem repeats of P-H-G-G-G-W-G-Q region spans residues 54 to 95; sequence PQGGGGWGQPHGGGWGQPHGGGWGQPHGGGWGQPHGGGGWGQ. Positions 55–97 are enriched in gly residues; sequence QGGGGWGQPHGGGWGQPHGGGWGQPHGGGWGQPHGGGGWGQGG. Residues His64, Gly65, Gly66, His72, Gly73, Gly74, His80, Gly81, Gly82, His88, Gly90, and Gly91 each contribute to the Cu(2+) site. Cys182 and Cys217 are disulfide-bonded. Residues Asn184 and Asn200 are each glycosylated (N-linked (GlcNAc...) asparagine). Ala233 carries the GPI-anchor amidated alanine lipid modification. Residues 234-256 constitute a propeptide, removed in mature form; it reads SVILFSSPPVILLISFLIFLIVG.

Belongs to the prion family. In terms of assembly, monomer and homodimer. Has a tendency to aggregate into amyloid fibrils containing a cross-beta spine, formed by a steric zipper of superposed beta-strands. Soluble oligomers may represent an intermediate stage on the path to fibril formation. Copper binding may promote oligomerization. Interacts with GRB2, APP, ERI3/PRNPIP and SYN1. Mislocalized cytosolically exposed PrP interacts with MGRN1; this interaction alters MGRN1 subcellular location and causes lysosomal enlargement. Interacts with KIAA1191.

Its subcellular location is the cell membrane. The protein resides in the golgi apparatus. Its primary physiological function is unclear. Has cytoprotective activity against internal or environmental stresses. May play a role in neuronal development and synaptic plasticity. May be required for neuronal myelin sheath maintenance. May play a role in iron uptake and iron homeostasis. Soluble oligomers are toxic to cultured neuroblastoma cells and induce apoptosis (in vitro). Association with GPC1 (via its heparan sulfate chains) targets PRNP to lipid rafts. Also provides Cu(2+) or Zn(2+) for the ascorbate-mediated GPC1 deaminase degradation of its heparan sulfate side chains. The sequence is that of Major prion protein (PRNP) from Cervus elaphus (Red deer).